The primary structure comprises 514 residues: Glutamate--cysteine ligase (514 aa).

The protein belongs to the glutamate--cysteine ligase type 1 family. Type 1 subfamily.

It catalyses the reaction L-cysteine + L-glutamate + ATP = gamma-L-glutamyl-L-cysteine + ADP + phosphate + H(+). It participates in sulfur metabolism; glutathione biosynthesis; glutathione from L-cysteine and L-glutamate: step 1/2. The chain is Glutamate--cysteine ligase from Enterobacter sp. (strain 638).